Consider the following 633-residue polypeptide: Chaperone protein HtpG (633 aa).

The tract at residues M1–R344 is a; substrate-binding. The segment at E345–R560 is b. The segment at L561 to S633 is c.

This sequence belongs to the heat shock protein 90 family. In terms of assembly, homodimer.

It is found in the cytoplasm. Functionally, molecular chaperone. Has ATPase activity. The sequence is that of Chaperone protein HtpG from Coxiella burnetii (strain RSA 493 / Nine Mile phase I).